A 378-amino-acid polypeptide reads, in one-letter code: Aminotransferase apf4 (378 aa).

Pyridoxal 5'-phosphate is bound at residue Arg-88. Lys-189 is subject to N6-(pyridoxal phosphate)lysine. Residue Glu-228 participates in pyridoxal 5'-phosphate binding. Residues 359-378 (ERGHNGQPTADPTRVIEMPE) form a disordered region.

This sequence belongs to the class-IV pyridoxal-phosphate-dependent aminotransferase family. Pyridoxal 5'-phosphate serves as cofactor.

It participates in secondary metabolite biosynthesis. Functionally, aminotransferase; part of the gene cluster that mediates the biosynthesis of the cyclic tetrapeptide apicidin F (APF). The non-ribosomal peptide synthetase apf1 incorporates four different amino acids to produce apicidin F: L-phenylalanine, D-pipecolic acid (D-pip), N-methoxy-L-tryptophan and L-2-aminooctanedioic acid. L-Phenylalanine is the only proteinogenic amino acid directly used by apf1. The 3 other apf1 substrates are non-proteinogenic and have to be modified by other enzymes of the cluster. Lysine is converted to delta-1-pyrroline-5-carboxylate (P5C) which is reduced to L-pipecolic acid (L-pip) by apf3. L-pip is epimerized to D-pip, probably by apf1 activity, prior to incorporation. L-Tryptophan is N-oxidyzed by one of the cytochrome P450 monooxygenases (apf7 or apf8), and further methylated at the hydroxy group by the O-methyltransferase apf6 to yield N-methoxy-L-tryptophan. The synthesis of the fourth apf1 substrate is more complex. The fatty acid synthase apf5 is involved in the synthesis of the octanoic acid backbone of L-2-aminooctanedioic acid by fixing one acetyl-CoA unit and three malonyl-CoA units. Then one of the cytochrome P450 monooxygenases (apf7 or apf8) may oxidize this backbone to 2-oxooctanoic acid. The aminotransferase apf4 is predicted to catalyze the exchange of the keto group with an amino group. The next step would be the oxidation of 2-aminooctanoic acid by one of the cytochrome P450 monooxygenases (apf7 or apf8). The last step is the oxidation of 2-amino-8-hydroxyoctanoic acid to 2-aminooctanedioic acid is catalyzed by the FAD-dependent monooxygenase apf9. The sequence is that of Aminotransferase apf4 from Gibberella fujikuroi (strain CBS 195.34 / IMI 58289 / NRRL A-6831) (Bakanae and foot rot disease fungus).